Consider the following 323-residue polypeptide: tRNA U34 carboxymethyltransferase (323 aa).

Carboxy-S-adenosyl-L-methionine-binding positions include Lys91, Trp105, Lys110, Gly130, 152–154, 181–182, Met196, Tyr200, and Arg315; these read DPT and IE.

It belongs to the class I-like SAM-binding methyltransferase superfamily. CmoB family. In terms of assembly, homotetramer.

The catalysed reaction is carboxy-S-adenosyl-L-methionine + 5-hydroxyuridine(34) in tRNA = 5-carboxymethoxyuridine(34) in tRNA + S-adenosyl-L-homocysteine + H(+). Catalyzes carboxymethyl transfer from carboxy-S-adenosyl-L-methionine (Cx-SAM) to 5-hydroxyuridine (ho5U) to form 5-carboxymethoxyuridine (cmo5U) at position 34 in tRNAs. This is tRNA U34 carboxymethyltransferase from Escherichia coli (strain K12 / MC4100 / BW2952).